The chain runs to 371 residues: MSIRVLLFSIFTGFLLAAAGPALAQGSRIKDVASLQAGRDNQLIGYGLVVGLQSTGDSLRSSPFTDQSMRAMLQNLGISTQGGQSSAKNVAAVMVTATLPPFGSPGSRIDATVSSLGDATSLRGGTLIMTSLSGADGQIYAVAQGSVVVSGFTAQGQAATVTEGVTTSGRVPNGAIIERELPSKFKDSVNLVLQLRNPDFSTSLGMARRINNYATATYGAPIAEARDSQEVVIQKPRTADLAQLMADIENLVVETDTPAKVVINERTGTIVIGADVRVSKVAVSYGTLTVQVNETPQVIQPQPFSSGTTATQPQTDISAQKTGDKVAIVDGPDLRTLVAGLNNIGVKPDGIIAILQGIKSAGALQAELVLQ.

An N-terminal signal peptide occupies residues 1–24 (MSIRVLLFSIFTGFLLAAAGPALA). Polar residues predominate over residues 301–321 (PQPFSSGTTATQPQTDISAQK). The interval 301–322 (PQPFSSGTTATQPQTDISAQKT) is disordered.

The protein belongs to the FlgI family. As to quaternary structure, the basal body constitutes a major portion of the flagellar organelle and consists of four rings (L,P,S, and M) mounted on a central rod.

It is found in the periplasm. The protein localises to the bacterial flagellum basal body. Its function is as follows. Assembles around the rod to form the L-ring and probably protects the motor/basal body from shearing forces during rotation. This chain is Flagellar P-ring protein, found in Allorhizobium ampelinum (strain ATCC BAA-846 / DSM 112012 / S4) (Agrobacterium vitis (strain S4)).